A 583-amino-acid polypeptide reads, in one-letter code: Undecaprenyl phosphate-alpha-4-amino-4-deoxy-L-arabinose arabinosyl transferase 2 (583 aa).

The tract at residues 1–20 (MTSRIQMHRTSPPPAYGTSA) is disordered. A run of 12 helical transmembrane segments spans residues 42-62 (LLLVAFGLFYLLPLTSHGLWI), 113-135 (LFGVRIASALSTGLSVLLAYLIT), 145-165 (SFAAALLYMSFGLIAGQAGYS), 166-186 (NLDPQFTLWVNLSLVALWFAL), 209-229 (FMTKGFLAWLLPVLIALPYMI), 241-261 (GLVAVLVAIGISLPWVLSIHA), 290-310 (WWFYLPLLVASSLPWAALLPG), 321-341 (QAPTGFLLLWFLLPLAFFSLS), 345-365 (LPTYIMPCLLPLAVLMGSALI), 380-400 (SLLNLLIGVAAMVALLYIQLT), 409-429 (MLGLSLVFIMLMGWIIANLLP), and 440-460 (PALGIWLLVALLPAGMPGFIV).

The protein belongs to the glycosyltransferase 83 family.

The protein resides in the cell inner membrane. It catalyses the reaction 4-amino-4-deoxy-alpha-L-arabinopyranosyl di-trans,octa-cis-undecaprenyl phosphate + lipid IVA = lipid IIA + di-trans,octa-cis-undecaprenyl phosphate.. The protein operates within lipopolysaccharide metabolism; 4-amino-4-deoxy-beta-L-arabinose-lipid A biosynthesis. Its function is as follows. Catalyzes the transfer of the L-Ara4N moiety of the glycolipid undecaprenyl phosphate-alpha-L-Ara4N to lipid A. The modified arabinose is attached to lipid A and is required for resistance to polymyxin and cationic antimicrobial peptides. The chain is Undecaprenyl phosphate-alpha-4-amino-4-deoxy-L-arabinose arabinosyl transferase 2 from Pseudomonas fluorescens (strain ATCC BAA-477 / NRRL B-23932 / Pf-5).